The chain runs to 248 residues: 1-(5-phosphoribosyl)-5-[(5-phosphoribosylamino)methylideneamino] imidazole-4-carboxamide isomerase (248 aa).

Catalysis depends on D8, which acts as the Proton acceptor. The Proton donor role is filled by D131.

Belongs to the HisA/HisF family.

The protein localises to the cytoplasm. It carries out the reaction 1-(5-phospho-beta-D-ribosyl)-5-[(5-phospho-beta-D-ribosylamino)methylideneamino]imidazole-4-carboxamide = 5-[(5-phospho-1-deoxy-D-ribulos-1-ylimino)methylamino]-1-(5-phospho-beta-D-ribosyl)imidazole-4-carboxamide. Its pathway is amino-acid biosynthesis; L-histidine biosynthesis; L-histidine from 5-phospho-alpha-D-ribose 1-diphosphate: step 4/9. The protein is 1-(5-phosphoribosyl)-5-[(5-phosphoribosylamino)methylideneamino] imidazole-4-carboxamide isomerase of Cupriavidus pinatubonensis (strain JMP 134 / LMG 1197) (Cupriavidus necator (strain JMP 134)).